We begin with the raw amino-acid sequence, 179 residues long: MAFLASGPYLTHQQKVLRLYKRALRHLESWCVQRDKYRYFACLMRARFEEHKNEKDMAKATQLLKEAEEEFWYRQHPQPYIFPDSPGGTSYERYDCYKVPEWCLDDWHPSEKAMYPDYFAKREKWKKLRRESWEREVKQLQEETPPGGPLTEALPPARKEGDLPPLWWYIVTRPRERPM.

The residue at position 2 (Ala-2) is an N-acetylalanine. A Phosphoserine modification is found at Ser-85. Residues 136–162 (EVKQLQEETPPGGPLTEALPPARKEGD) are disordered.

It belongs to the complex I LYR family. As to quaternary structure, mammalian complex I is composed of 45 different subunits.

The protein resides in the mitochondrion inner membrane. Its function is as follows. Accessory subunit of the mitochondrial membrane respiratory chain NADH dehydrogenase (Complex I), that is believed to be not involved in catalysis. Complex I functions in the transfer of electrons from NADH to the respiratory chain. The immediate electron acceptor for the enzyme is believed to be ubiquinone. This chain is NADH dehydrogenase [ubiquinone] 1 beta subcomplex subunit 9 (NDUFB9), found in Pan troglodytes (Chimpanzee).